The following is a 253-amino-acid chain: Sulfate transporter CysZ (253 aa).

Helical transmembrane passes span phenylalanine 31–phenylalanine 51, leucine 72–phenylalanine 92, isoleucine 151–tryptophan 171, and isoleucine 222–valine 242.

Belongs to the CysZ family.

The protein localises to the cell inner membrane. Functionally, possibly involved in sulfate transport. In terms of biological role, high affinity, high specificity proton-dependent sulfate transporter, which mediates sulfate uptake. Provides the sulfur source for the cysteine synthesis pathway. The polypeptide is Sulfate transporter CysZ (Salmonella typhimurium (strain LT2 / SGSC1412 / ATCC 700720)).